The sequence spans 391 residues: Processive diacylglycerol beta-glucosyltransferase (391 aa).

The protein belongs to the glycosyltransferase 28 family. UgtP subfamily.

It localises to the cell membrane. The enzyme catalyses a 1,2-diacyl-3-O-(beta-D-glucopyranosyl)-sn-glycerol + UDP-alpha-D-glucose = a 1,2-diacyl-3-O-(beta-D-Glc-(1-&gt;6)-beta-D-Glc)-sn-glycerol + UDP + H(+). It carries out the reaction a 1,2-diacyl-sn-glycerol + UDP-alpha-D-glucose = a 1,2-diacyl-3-O-(beta-D-glucopyranosyl)-sn-glycerol + UDP + H(+). It participates in glycolipid metabolism; diglucosyl-diacylglycerol biosynthesis. Processive glucosyltransferase involved in the biosynthesis of both the bilayer- and non-bilayer-forming membrane glucolipids. Is able to successively transfer two glucosyl residues to diacylglycerol (DAG), thereby catalyzing the formation of beta-monoglucosyl-DAG (3-O-(beta-D-glucopyranosyl)-1,2-diacyl-sn-glycerol) and beta-diglucosyl-DAG (3-O-(beta-D-glucopyranosyl-beta-(1-&gt;6)-D-glucopyranosyl)-1,2-diacyl-sn-glycerol). Beta-diglucosyl-DAG is the predominant glycolipid found in Bacillales and is also used as a membrane anchor for lipoteichoic acid (LTA). This chain is Processive diacylglycerol beta-glucosyltransferase, found in Staphylococcus haemolyticus (strain JCSC1435).